We begin with the raw amino-acid sequence, 452 residues long: Pup--protein ligase (452 aa).

Glu-9 serves as a coordination point for Mg(2+). Arg-53 contacts ATP. Position 55 (Tyr-55) interacts with Mg(2+). Asp-57 serves as the catalytic Proton acceptor. Glu-63 serves as a coordination point for Mg(2+). Residues Thr-66 and Trp-419 each coordinate ATP.

The protein belongs to the Pup ligase/Pup deamidase family. Pup-conjugating enzyme subfamily.

The enzyme catalyses ATP + [prokaryotic ubiquitin-like protein]-L-glutamate + [protein]-L-lysine = ADP + phosphate + N(6)-([prokaryotic ubiquitin-like protein]-gamma-L-glutamyl)-[protein]-L-lysine.. Its pathway is protein degradation; proteasomal Pup-dependent pathway. The protein operates within protein modification; protein pupylation. In terms of biological role, catalyzes the covalent attachment of the prokaryotic ubiquitin-like protein modifier Pup to the proteasomal substrate proteins, thereby targeting them for proteasomal degradation. This tagging system is termed pupylation. The ligation reaction involves the side-chain carboxylate of the C-terminal glutamate of Pup and the side-chain amino group of a substrate lysine. The sequence is that of Pup--protein ligase from Streptosporangium roseum (strain ATCC 12428 / DSM 43021 / JCM 3005 / KCTC 9067 / NCIMB 10171 / NRRL 2505 / NI 9100).